We begin with the raw amino-acid sequence, 396 residues long: Phosphoglycerate kinase (396 aa).

Substrate is bound by residues aspartate 21–asparagine 23, arginine 36, histidine 59–lysine 62, arginine 119, and arginine 156. ATP is bound by residues lysine 206, glutamate 325, and glycine 352–serine 355.

It belongs to the phosphoglycerate kinase family. In terms of assembly, monomer.

The protein localises to the cytoplasm. It catalyses the reaction (2R)-3-phosphoglycerate + ATP = (2R)-3-phospho-glyceroyl phosphate + ADP. The protein operates within carbohydrate degradation; glycolysis; pyruvate from D-glyceraldehyde 3-phosphate: step 2/5. This is Phosphoglycerate kinase from Macrococcus caseolyticus (strain JCSC5402) (Macrococcoides caseolyticum).